Consider the following 455-residue polypeptide: MIKAIDTIVAQATAPGRGGVGIIRISGPDVEAVAKVILGKVPKLRFAEYLSFSDQHNEVLDQGIALFFKAPNSFTGEDVLELQGHGGPVVMDMLIKAILSIKNLRGANPGEFSERAFMNDKLDLAQAEGIADLIEATSEQAAKSALHSLQGEFSEKIEQLVESLIYLRIYVEASIDFPEEEVDFLSDGKISKGLYQIIDNLEAVKKQAKQGAILRDGMKVVIAGRPNAGKSSLLNSLVGVERAIVTDIAGTTRDVMREHIHIDGMPLHIIDTAGLREGADEIEKIGIERAWQEITTADRILFMLDATTTSAEDPRQIWPDFIDKLPKSVGLTVVRNKADLTGEAFSMTENHDHPVYRISAKTGQGVDLLKEHLKDIMGYQGHTTSGFMARRRHLEAIDNAQRHLLEGKVQLEEYKAGELLAEELRLTQQYLSEITGAFSSDDLLGKIFSSFCIGK.

(6S)-5-formyl-5,6,7,8-tetrahydrofolate-binding residues include R24, E81, and K121. Positions 217-378 (GMKVVIAGRP…LKEHLKDIMG (162 aa)) constitute a TrmE-type G domain. N227 contacts K(+). GTP-binding positions include 227 to 232 (NAGKSS), 246 to 252 (TDIAGTT), 271 to 274 (DTAG), and 336 to 339 (NKAD). Residue S231 participates in Mg(2+) binding. K(+) contacts are provided by T246, I248, and T251. T252 lines the Mg(2+) pocket. K455 contributes to the (6S)-5-formyl-5,6,7,8-tetrahydrofolate binding site.

Belongs to the TRAFAC class TrmE-Era-EngA-EngB-Septin-like GTPase superfamily. TrmE GTPase family. Homodimer. Heterotetramer of two MnmE and two MnmG subunits. Requires K(+) as cofactor.

The protein resides in the cytoplasm. Functionally, exhibits a very high intrinsic GTPase hydrolysis rate. Involved in the addition of a carboxymethylaminomethyl (cmnm) group at the wobble position (U34) of certain tRNAs, forming tRNA-cmnm(5)s(2)U34. This is tRNA modification GTPase MnmE from Psychromonas ingrahamii (strain DSM 17664 / CCUG 51855 / 37).